The primary structure comprises 328 residues: UPF0421 protein SE_1574 (328 aa).

4 helical membrane passes run 26-46 (LFCM…IVTI), 61-81 (LPAT…FGDQ), 109-129 (AVLT…FNFF), and 132-152 (LLTA…ILPP).

Belongs to the UPF0421 family.

It localises to the cell membrane. The protein is UPF0421 protein SE_1574 of Staphylococcus epidermidis (strain ATCC 12228 / FDA PCI 1200).